The following is a 241-amino-acid chain: Histone H1-II (241 aa).

Positions 1 to 10 (MASDAPEVKA) are enriched in basic and acidic residues. 2 disordered regions span residues 1–27 (MASD…THPP) and 89–241 (NSYK…AKKA). The segment covering 11-20 (PKAKTQKKPK) has biased composition (basic residues). The region spanning 24–95 (THPPYIQMVT…KVKNSYKLSD (72 aa)) is the H15 domain. The span at 99-111 (SKAKAAAKPKAAP) shows a compositional bias: basic residues. A run of 3 repeats spans residues 111-116 (PKKAAA), 117-122 (PKKAAA), and 123-128 (PKKAKA). The segment at 111–217 (PKKAAAPKKA…KAATPKKAKA (107 aa)) is 8 X 6 AA repeats of P-K-K-A-[AK]-A. The span at 129–155 (PKKEGEKKAVKPKSEKKAAKPKTEKKP) shows a compositional bias: basic and acidic residues. Composition is skewed to basic residues over residues 156 to 184 (KAAK…KATP) and 194 to 241 (AAPK…AKKA). A DNA-binding region spans residues 183-186 (TPKK). 5 consecutive repeat copies span residues 184-189 (PKKAAA), 190-195 (PKKAAA), 196-201 (PKKAKA), 204-209 (PKKAKA), and 212-217 (PKKAKA). 2 DNA-binding regions span residues 203 to 206 (TPKK) and 211 to 214 (TPKK).

It belongs to the histone H1/H5 family.

It localises to the nucleus. The protein resides in the chromosome. In terms of biological role, histones H1 are necessary for the condensation of nucleosome chains into higher-order structures. This chain is Histone H1-II (H1-II), found in Volvox carteri (Green alga).